The primary structure comprises 400 residues: MSNETNANSTDSRQGVTNIGSVPAYLVLADGRTFKGFGFGAIGTTLGEAVFTTAMTGYQETMTDPSYHRQIVVATAPQIGNTGWNEEDNESHDGSIWVAGLVIRDLAVRVSNWRATTTLQEEMAKQGVVGIGGIDTRALVRHIRNEGAVPAGIFSGADAERPIEELVEIVKSQPSMVGANLAVEVSVDKPYVIEAEGEARHTVVAYDLGIKQNTPRRFAARGVRTVIVPAETPFEEIKQYNPSGVFISNGPGDPAAADIMVNIVREVLAADIPFFGICFGNQILGRAFGMETYKLKFGHRGINVPVKNHITGKIDITAQNHGFALKGEAGQEFETDFGTAVVTHTCLNDGVVEGVALKSGRAYSVQYHPEAAAGPNDASPLFDQFVALMDEDSENQKEEA.

The CPSase stretch occupies residues 1–199; that stretch reads MSNETNANST…PYVIEAEGEA (199 aa). L-glutamine-binding residues include Ser66, Gly250, and Gly252. Residues 200–395 enclose the Glutamine amidotransferase type-1 domain; sequence RHTVVAYDLG…VALMDEDSEN (196 aa). Cys278 functions as the Nucleophile in the catalytic mechanism. The L-glutamine site is built by Phe279, Gln282, Asn320, Gly322, and Phe323. Active-site residues include His368 and Glu370.

It belongs to the CarA family. In terms of assembly, composed of two chains; the small (or glutamine) chain promotes the hydrolysis of glutamine to ammonia, which is used by the large (or ammonia) chain to synthesize carbamoyl phosphate. Tetramer of heterodimers (alpha,beta)4.

The enzyme catalyses hydrogencarbonate + L-glutamine + 2 ATP + H2O = carbamoyl phosphate + L-glutamate + 2 ADP + phosphate + 2 H(+). It carries out the reaction L-glutamine + H2O = L-glutamate + NH4(+). It functions in the pathway amino-acid biosynthesis; L-arginine biosynthesis; carbamoyl phosphate from bicarbonate: step 1/1. Its pathway is pyrimidine metabolism; UMP biosynthesis via de novo pathway; (S)-dihydroorotate from bicarbonate: step 1/3. Functionally, small subunit of the glutamine-dependent carbamoyl phosphate synthetase (CPSase). CPSase catalyzes the formation of carbamoyl phosphate from the ammonia moiety of glutamine, carbonate, and phosphate donated by ATP, constituting the first step of 2 biosynthetic pathways, one leading to arginine and/or urea and the other to pyrimidine nucleotides. The small subunit (glutamine amidotransferase) binds and cleaves glutamine to supply the large subunit with the substrate ammonia. This Corynebacterium efficiens (strain DSM 44549 / YS-314 / AJ 12310 / JCM 11189 / NBRC 100395) protein is Carbamoyl phosphate synthase small chain.